The chain runs to 339 residues: DNA-directed RNA polymerase subunit alpha (339 aa).

Positions 1 to 235 (MVIQKNWQEL…DQLQVFVNFE (235 aa)) are alpha N-terminal domain (alpha-NTD). The tract at residues 251 to 339 (FNPALLKKVD…DLAKRFEEHY (89 aa)) is alpha C-terminal domain (alpha-CTD).

It belongs to the RNA polymerase alpha chain family. Homodimer. The RNAP catalytic core consists of 2 alpha, 1 beta, 1 beta' and 1 omega subunit. When a sigma factor is associated with the core the holoenzyme is formed, which can initiate transcription.

It catalyses the reaction RNA(n) + a ribonucleoside 5'-triphosphate = RNA(n+1) + diphosphate. Functionally, DNA-dependent RNA polymerase catalyzes the transcription of DNA into RNA using the four ribonucleoside triphosphates as substrates. The chain is DNA-directed RNA polymerase subunit alpha from Methylorubrum extorquens (strain CM4 / NCIMB 13688) (Methylobacterium extorquens).